Here is a 326-residue protein sequence, read N- to C-terminus: Phospho-N-acetylmuramoyl-pentapeptide-transferase (326 aa).

10 helical membrane passes run 5–25 (GLLI…PIFI), 51–71 (TPTM…LIMA), 82–102 (VWLL…DDFI), 122–142 (IIIA…TVIY), 148–168 (LQFD…VGAS), 180–200 (LLAG…WYGI), 204–224 (VVAV…VFNA), 229–249 (VFMG…ISIL), 252–272 (LEIL…SVII), and 304–324 (VVTT…YIEV).

Belongs to the glycosyltransferase 4 family. MraY subfamily. The cofactor is Mg(2+).

It is found in the cell membrane. The catalysed reaction is UDP-N-acetyl-alpha-D-muramoyl-L-alanyl-gamma-D-glutamyl-meso-2,6-diaminopimeloyl-D-alanyl-D-alanine + di-trans,octa-cis-undecaprenyl phosphate = di-trans,octa-cis-undecaprenyl diphospho-N-acetyl-alpha-D-muramoyl-L-alanyl-D-glutamyl-meso-2,6-diaminopimeloyl-D-alanyl-D-alanine + UMP. It participates in cell wall biogenesis; peptidoglycan biosynthesis. Functionally, catalyzes the initial step of the lipid cycle reactions in the biosynthesis of the cell wall peptidoglycan: transfers peptidoglycan precursor phospho-MurNAc-pentapeptide from UDP-MurNAc-pentapeptide onto the lipid carrier undecaprenyl phosphate, yielding undecaprenyl-pyrophosphoryl-MurNAc-pentapeptide, known as lipid I. The chain is Phospho-N-acetylmuramoyl-pentapeptide-transferase from Oceanobacillus iheyensis (strain DSM 14371 / CIP 107618 / JCM 11309 / KCTC 3954 / HTE831).